The chain runs to 388 residues: P2X purinoceptor 4 (388 aa).

Residues 1–33 lie on the Cytoplasmic side of the membrane; sequence MAGCCSVLGSFLFEYDTPRIVLIRSRKVGLMNR. The helical transmembrane segment at 34–54 threads the bilayer; it reads AVQLLILAYVIGWVFVWEKGY. Over 55–338 the chain is Extracellular; it reads QETDSVVSSV…KFDIIPTMIN (284 aa). The ATP site is built by Lys67 and Lys69. Residues Lys67 and Lys69 each contribute to the CTP site. N-linked (GlcNAc...) asparagine glycosylation is found at Asn75 and Asn110. Cystine bridges form between Cys116-Cys165, Cys126-Cys149, and Cys132-Cys159. N-linked (GlcNAc...) asparagine glycans are attached at residues Asn153 and Asn184. 2 residues coordinate ATP: Thr186 and Leu188. Thr186 is a binding site for CTP. N-linked (GlcNAc...) asparagine glycosylation is found at Asn199 and Asn208. 2 cysteine pairs are disulfide-bonded: Cys217-Cys227 and Cys261-Cys270. ATP contacts are provided by Asn293, Arg295, and Lys313. Asn293, Arg295, and Lys313 together coordinate CTP. Residues 339–359 form a helical membrane-spanning segment; sequence VGSGLALLGVATVLCDVIVLY. The Cytoplasmic segment spans residues 360 to 388; it reads CMKKKYYYRDKKYKYVEDYEQGLSGEMNQ.

It belongs to the P2X receptor family. In terms of assembly, functional P2RXs are organized as homomeric and heteromeric trimers. Forms heterotrimer with P2RX1. Interacts with P2RX7 (via C-terminus); this interaction is functional only in the presence of ATP. Forms heterotrimer with P2RX4; functional differences between homomeric P2RX4 and P2RX4/6 heterotrimer are minor. Interacts with AP1M2. As to expression, widespread distribution in the brain. Strongly expressed in microglial cells. Also expressed in epithelial cells.

The protein resides in the cell membrane. It is found in the lysosome membrane. The enzyme catalyses K(+)(in) = K(+)(out). It catalyses the reaction Na(+)(in) = Na(+)(out). The catalysed reaction is Ca(2+)(in) = Ca(2+)(out). Its activity is regulated as follows. Activated by ATP. pH-dependent and inhibited by acidic pH. ATP-gated nonselective transmembrane cation channel permeable to potassium, sodium and calcium. CTP, but not GTP or UTP, functions as a weak affinity agonist for P2RX4. Activated by extracellularly released ATP, it plays multiple role in immunity and central nervous system physiology. Plays a key role in initial steps of T-cell activation and Ca(2+) microdomain formation. Also participates in basal T-cell activity without TCR/CD3 stimulation. Promotes the differentiation and activation of Th17 cells via expression of retinoic acid-related orphan receptor C/RORC. Upon activation, drives microglia motility via the PI3K/Akt pathway. Could also function as an ATP-gated cation channel of lysosomal membranes. This chain is P2X purinoceptor 4 (P2rx4), found in Rattus norvegicus (Rat).